The chain runs to 126 residues: MTWQAYIDTNLIGSGFISAQILSSADGSSWANSNGFSVSATEAQHILSCFKDSNKASAMGITINNVKNFVLKADDKSIYAKKDAGGVVLVKTNQTILVAVYNSNLQPGAAANACEALGDYLREQGF.

Belongs to the profilin family. Occurs in many kinds of cells as a complex with monomeric actin in a 1:1 ratio.

It is found in the cytoplasm. Its subcellular location is the cytoskeleton. Its function is as follows. Binds to actin and affects the structure of the cytoskeleton. At high concentrations, profilin prevents the polymerization of actin, whereas it enhances it at low concentrations. By binding to PIP2, it inhibits the formation of IP3 and DG. The protein is Profilin-3 (proC) of Dictyostelium discoideum (Social amoeba).